Consider the following 797-residue polypeptide: Ribosome biogenesis protein BOP1 homolog (797 aa).

2 disordered regions span residues 22 to 112 (LVPS…GGGP) and 149 to 177 (SICANTKPRAGPDPGSDSSEDERPNRNTV). Residues 61 to 73 (AGAAAAAVEGTAA) are compositionally biased toward low complexity. Positions 74 to 87 (PEDEAADNSSEEDA) are enriched in acidic residues. The segment covering 90–112 (GSHGEGAGEGGGSGTWPGNGGGP) has biased composition (gly residues). WD repeat units follow at residues 462–502 (GHMG…CWRT), 504–544 (VLEG…EEAE), 581–623 (RLRF…SQNP), 626–664 (KNRGRVVRVAFHPTKPFFFVATQNHVRVYNLAKQALAKK), 667–706 (GGGGVLSCLALHPGGDHVLVGSDDKRVAWYDLDLSTKPYK), 710–749 (YHSAPPRAVAFHRSYPLFASAADDGTVQVFHGMVYADLLT), and 766–797 (TASEGVADCAFHPTQPWIFTAGADSKILLYCN).

Belongs to the WD repeat BOP1/ERB1 family.

The protein localises to the nucleus. It localises to the nucleolus. Its subcellular location is the nucleoplasm. Functionally, required for maturation of ribosomal RNAs and formation of the large ribosomal subunit. The sequence is that of Ribosome biogenesis protein BOP1 homolog from Chlamydomonas reinhardtii (Chlamydomonas smithii).